Consider the following 450-residue polypeptide: Neutral protease 2 homolog AFUB_070680 (450 aa).

Residues 1–19 (MKITALASAILAVAQGALA) form the signal peptide. Positions 20-172 (LPARAPALDI…PASIKPLDRR (153 aa)) are excised as a propeptide. Cystine bridges form between Cys-179–Cys-251 and Cys-258–Cys-276. His-300 serves as a coordination point for Zn(2+). Glu-301 is an active-site residue. Zn(2+) is bound by residues His-304 and Asp-315. Residues 364-392 (QPGQTEPGTQTMWDGYSQPGQTEPGTQTM) show a composition bias toward polar residues. Positions 364 to 416 (QPGQTEPGTQTMWDGYSQPGQTEPGTQTMWDGYSQPGQTEPGTQTTWDGYSQP) are disordered. Positions 398 to 409 (QPGQTEPGTQTT) are enriched in low complexity.

The protein belongs to the peptidase M35 family. Zn(2+) is required as a cofactor.

Its subcellular location is the secreted. It carries out the reaction Preferential cleavage of bonds with hydrophobic residues in P1'. Also 3-Asn-|-Gln-4 and 8-Gly-|-Ser-9 bonds in insulin B chain.. Secreted metalloproteinase that allows assimilation of proteinaceous substrates. Shows high activities on basic nuclear substrates such as histone and protamine. May be involved in virulence. This chain is Neutral protease 2 homolog AFUB_070680, found in Aspergillus fumigatus (strain ATCC MYA-4609 / CBS 101355 / FGSC A1100 / Af293) (Neosartorya fumigata).